Reading from the N-terminus, the 156-residue chain is Translationally controlled tumor protein 2 (156 aa).

Residues 1–156 (MLVYQDILTG…LAYGLKEIKC (156 aa)) enclose the TCTP domain.

It belongs to the TCTP family. Expressed in stems, cauline leaves, minor veins of rosette leaves, roots, lateral root primordia, vascular tissues of petioles and inflorescences, base of siliques, papillae and ovules. Not detected in root meristems, anthers or seeds. Expressed in stomata, trichomes and root cortex.

It localises to the nucleus. Its subcellular location is the cytoplasm. Its function is as follows. Regulates proliferation. Induces whole plant regeneration when expressed in heterologous systems. Involved in root growth and lateral root development, with a probable role in cell reprogramming. The long-distance transport of TCTP RNA and/or protein in plants may have an important role in regulation of growth and development. In Arabidopsis thaliana (Mouse-ear cress), this protein is Translationally controlled tumor protein 2.